We begin with the raw amino-acid sequence, 75 residues long: MKTCLVFAFFLVAVFAAVQAEENDSPQTLPRRLTVRAAQSFGRCNQKQCDADCVKKGYFGGLCTLTSCFCTGSRS.

The first 20 residues, 1–20 (MKTCLVFAFFLVAVFAAVQA), serve as a signal peptide directing secretion. The propeptide occupies 21-32 (EENDSPQTLPRR). 3 disulfide bridges follow: Cys-44–Cys-63, Cys-49–Cys-68, and Cys-53–Cys-70.

It belongs to the invertebrate defensin family.

Its subcellular location is the secreted. Its function is as follows. Has antibacterial activity. This Lonomia obliqua (Moth) protein is Defense protein 6.